A 395-amino-acid polypeptide reads, in one-letter code: Acetate kinase (395 aa).

N8 contacts Mg(2+). ATP is bound at residue K15. Substrate is bound at residue R89. D146 acts as the Proton donor/acceptor in catalysis. ATP contacts are provided by residues 206–210 (HLGNG), 281–283 (DLR), and 329–333 (GIGEN). E382 provides a ligand contact to Mg(2+).

This sequence belongs to the acetokinase family. Homodimer. Mg(2+) serves as cofactor. Mn(2+) is required as a cofactor.

The protein localises to the cytoplasm. The catalysed reaction is acetate + ATP = acetyl phosphate + ADP. The protein operates within metabolic intermediate biosynthesis; acetyl-CoA biosynthesis; acetyl-CoA from acetate: step 1/2. Induced by glucose excess, the induction may be mediated by CcpA transcriptional regulator. In terms of biological role, catalyzes the formation of acetyl phosphate from acetate and ATP. Can also catalyze the reverse reaction. Appears to favor the formation of acetate. Involved in the secretion of excess carbohydrate. The chain is Acetate kinase from Bacillus subtilis (strain 168).